The sequence spans 262 residues: Ribose-5-phosphate isomerase A (262 aa).

Substrate is bound by residues 33–36, 89–92, and 102–105; these read TGST, DGAD, and KGGG. E111 serves as the catalytic Proton acceptor. K129 lines the substrate pocket.

The protein belongs to the ribose 5-phosphate isomerase family. Homodimer.

It catalyses the reaction aldehydo-D-ribose 5-phosphate = D-ribulose 5-phosphate. It participates in carbohydrate degradation; pentose phosphate pathway; D-ribose 5-phosphate from D-ribulose 5-phosphate (non-oxidative stage): step 1/1. In terms of biological role, catalyzes the reversible conversion of ribose-5-phosphate to ribulose 5-phosphate. This is Ribose-5-phosphate isomerase A from Ruegeria pomeroyi (strain ATCC 700808 / DSM 15171 / DSS-3) (Silicibacter pomeroyi).